Reading from the N-terminus, the 583-residue chain is Epsin-2 (583 aa).

Residues arginine 8, lysine 11, arginine 25, asparagine 30, arginine 63, and histidine 73 each coordinate a 1,2-diacyl-sn-glycero-3-phospho-(1D-myo-inositol-4,5-bisphosphate). The ENTH domain maps to 12-144 (NIVNSYSEAE…KDEERLKVER (133 aa)). Residues 165 to 181 (QITFGRGSSQPNLSISH) are compositionally biased toward polar residues. The interval 165–217 (QITFGRGSSQPNLSISHSEQEYGKAGGSPASYHGSTSPRVSSELEQARPQTSG) is disordered. At arginine 170 the chain carries Omega-N-methylarginine. Phosphoserine occurs at positions 173, 192, and 195. Positions 197–216 (HGSTSPRVSSELEQARPQTS) are enriched in polar residues. 2 UIM domains span residues 218–237 (EEEL…AEQE) and 243–262 (GDDL…TVKV). Disordered stretches follow at residues 293–384 (SGPV…KPSP) and 411–457 (TSKK…PESF). A run of 4 repeats spans residues 301-303 (EPW), 313-315 (NPW), 326-328 (DPW), and 340-342 (DPW). A compositionally biased stretch (polar residues) spans 301–315 (EPWSTGTPANQTNPW). Positions 301–377 (EPWSTGTPAN…SDAGKTADAW (77 aa)) are 6 X 3 AA repeats of [DE]-P-W. Polar residues predominate over residues 346–355 (TTASIQSVPK). A run of 2 repeats spans residues 358 to 360 (DPW) and 375 to 377 (DAW). A Phosphoserine modification is found at serine 431. The segment covering 437-448 (SQSLTSASSKPS) has biased composition (low complexity). Threonine 453 is subject to Phosphothreonine. 2 tandem repeats follow at residues 482-484 (NPF) and 496-498 (NPF). The interval 482–581 (NPFLAPGAAA…AQPAGTTNPF (100 aa)) is 3 X 3 AA repeats of N-P-F. Serine 514 is subject to Phosphoserine. Repeat unit 3 spans residues 579–581 (NPF).

Belongs to the epsin family. As to quaternary structure, binds AP-2 and clathrin. Interacts with ITSN1. Interacts with UBQLN2. Binds EPS15. Post-translationally, ubiquitinated. As to expression, highly expressed in brain. Detected at lower levels in lung, liver, muscle and testis.

It localises to the cytoplasm. Its function is as follows. Plays a role in the formation of clathrin-coated invaginations and endocytosis. This chain is Epsin-2 (Epn2), found in Rattus norvegicus (Rat).